The following is a 191-amino-acid chain: Protein GrpE (191 aa).

Residues 1 to 19 (MKDEHNQKHDHLSQKEPES) are compositionally biased toward basic and acidic residues. A disordered region spans residues 1-44 (MKDEHNQKHDHLSQKEPESYQKACACKEQQDEEMQEAGEKEGEI).

This sequence belongs to the GrpE family. In terms of assembly, homodimer.

It localises to the cytoplasm. Functionally, participates actively in the response to hyperosmotic and heat shock by preventing the aggregation of stress-denatured proteins, in association with DnaK and GrpE. It is the nucleotide exchange factor for DnaK and may function as a thermosensor. Unfolded proteins bind initially to DnaJ; upon interaction with the DnaJ-bound protein, DnaK hydrolyzes its bound ATP, resulting in the formation of a stable complex. GrpE releases ADP from DnaK; ATP binding to DnaK triggers the release of the substrate protein, thus completing the reaction cycle. Several rounds of ATP-dependent interactions between DnaJ, DnaK and GrpE are required for fully efficient folding. This chain is Protein GrpE, found in Helicobacter pylori (strain G27).